A 154-amino-acid chain; its full sequence is Gene 35 protein (154 aa).

Positions 116-137 (LTAAQDDPVEGGPEPADVADTI) are disordered.

Belongs to the herpesviridae UL96 family.

The chain is Gene 35 protein (35) from Equus caballus (Horse).